The chain runs to 623 residues: (-)-alpha-pinene synthase 1, chloroplastic (623 aa).

The N-terminal 52 residues, 1–52, are a transit peptide targeting the chloroplast; it reads MDLISVLPSASKSCVCLHKPLSSSTHKLKPFCKTIRILGMPRRWKFAGPSMS. Positions 374, 378, and 526 each coordinate Mg(2+). The DDXXD motif motif lies at 374 to 378; sequence DDMYD.

The protein belongs to the terpene synthase family. Tpsd subfamily. Mg(2+) serves as cofactor. Mn(2+) is required as a cofactor.

It is found in the plastid. Its subcellular location is the chloroplast. It carries out the reaction (2E)-geranyl diphosphate = (1S,5S)-alpha-pinene + diphosphate. The enzyme catalyses (2E)-geranyl diphosphate = (1S,5S)-beta-pinene + diphosphate. It catalyses the reaction (2E)-geranyl diphosphate = (-)-beta-phellandrene + diphosphate. The protein operates within terpene metabolism; oleoresin biosynthesis. It participates in secondary metabolite biosynthesis; terpenoid biosynthesis. Its function is as follows. Monoterpene synthase (TPS) involved in the biosynthesis of monoterpene natural products included in conifer oleoresin secretions and volatile emissions; these compounds contribute to biotic and abiotic stress defense against herbivores and pathogens. Catalyzes the conversion of (2E)-geranyl diphosphate (GPP) to (-)-alpha-pinene and (-)-beta-pinene, and, to a lower extent, to (-)-beta-phellandrene. The polypeptide is (-)-alpha-pinene synthase 1, chloroplastic (Pinus banksiana (Jack pine)).